The primary structure comprises 384 residues: Sensor-like histidine kinase SenX3 (384 aa).

Residues 153 to 369 form the Histidine kinase domain; it reads NVSHELKTPV…TFTLSIPEYP (217 aa). Residue H156 is modified to Phosphohistidine; by autocatalysis. The segment at 360-384 is disordered; that stretch reads TFTLSIPEYPDPESHSDEREDQRER. The span at 371–384 shows a compositional bias: basic and acidic residues; the sequence is PESHSDEREDQRER.

Autophosphorylated.

The protein resides in the cell membrane. It catalyses the reaction ATP + protein L-histidine = ADP + protein N-phospho-L-histidine.. Its function is as follows. Member of the two-component regulatory system SenX3/RegX3 involved in stress response. The system is involved in phosphate starvation response. Probably exhibits a dual role as a phosphatase or a phosphodonor for the response regulator RegX3, depending upon phosphate availability. When environmental phosphate is abundant, SenX3 is required to maintain RegX3 in an unphosphorylated state, where it is unable to bind target DNA. Under conditions of phosphate limitation, SenX3 autophosphorylates and then transfers the phosphate group to RegX3. Probably does not itself sense phosphate concentrations, which may be relayed to SenX3 by the PstSCAB phosphate transporter system. This is Sensor-like histidine kinase SenX3 from Mycolicibacterium smegmatis (strain ATCC 700084 / mc(2)155) (Mycobacterium smegmatis).